The chain runs to 339 residues: Protein FAM76B (339 aa).

At A2 the chain carries N-acetylalanine. Phosphoserine occurs at positions 22 and 148. Positions 144–243 are disordered; that stretch reads EQRKSLGSSH…INQSADSGGT (100 aa). Low complexity predominate over residues 148–160; it reads SLGSSHSNSSSSS. The segment covering 167–189 has biased composition (basic residues); sequence HHPKHHHHHHHHHHRHSSSHHKI. The residue at position 193 (S193) is a Phosphoserine. T215 bears the Phosphothreonine mark. Over residues 215–224 the composition is skewed to basic and acidic residues; sequence TPKKKPKLES. Positions 228–243 are enriched in polar residues; the sequence is NGDSSSINQSADSGGT. The stretch at 248 to 328 forms a coiled coil; it reads LISQLKEEVM…QVAALSKGKK (81 aa).

Belongs to the FAM76 family. Interacts with HNRNPA2B1 (via C-terminus); the interaction results in retention of HNRNPA2B1 in the nucleus and inhibition of the NF-kappa-B-mediated inflammatory pathway.

The protein resides in the nucleus speckle. In terms of biological role, negatively regulates the NF-kappa-B-mediated inflammatory pathway by preventing the translocation of HNRNPA2B1 from the nucleus to the cytoplasm. Inhibits the PI3K/Akt/NF-kappa-B pathway-mediated polarization of M1 macrophages by binding to and stabilizing PIK3CD mRNA, resulting in increased levels of PIK3CD protein and increased levels of phosphorylated downstream target AKT which leads to decreased NF-kappa-B signaling. The polypeptide is Protein FAM76B (FAM76B) (Homo sapiens (Human)).